We begin with the raw amino-acid sequence, 110 residues long: Large ribosomal subunit protein uL22 (110 aa).

It belongs to the universal ribosomal protein uL22 family. Part of the 50S ribosomal subunit.

Functionally, this protein binds specifically to 23S rRNA; its binding is stimulated by other ribosomal proteins, e.g. L4, L17, and L20. It is important during the early stages of 50S assembly. It makes multiple contacts with different domains of the 23S rRNA in the assembled 50S subunit and ribosome. In terms of biological role, the globular domain of the protein is located near the polypeptide exit tunnel on the outside of the subunit, while an extended beta-hairpin is found that lines the wall of the exit tunnel in the center of the 70S ribosome. The sequence is that of Large ribosomal subunit protein uL22 from Halorhodospira halophila (strain DSM 244 / SL1) (Ectothiorhodospira halophila (strain DSM 244 / SL1)).